Reading from the N-terminus, the 153-residue chain is Histone H2B.6 (153 aa).

Basic and acidic residues-rich tracts occupy residues 1-28 (MAPK…EKAP) and 36-53 (EKRL…EGKK). A disordered region spans residues 1 to 60 (MAPKAEKKPAAKKPAEEEPAAEKAEKAPAGKKPKAEKRLPAGKGEKGSGEGKKAGRKKGK). N6-acetyllysine is present on residues K7 and K37. A Glycyl lysine isopeptide (Lys-Gly) (interchain with G-Cter in ubiquitin) cross-link involves residue K149.

The protein belongs to the histone H2B family. The nucleosome is a histone octamer containing two molecules each of H2A, H2B, H3 and H4 assembled in one H3-H4 heterotetramer and two H2A-H2B heterodimers. The octamer wraps approximately 147 bp of DNA. Can be acetylated to form H2BK6ac and H2BK33ac. In terms of processing, monoubiquitinated by BRE1 to form H2BK143ub1 and deubiquitinated by UBP26. Required for heterochromatic histone H3 di- and trimethylation at H3K4me. May give a specific tag for epigenetic transcriptional activation.

It is found in the nucleus. It localises to the chromosome. In terms of biological role, core component of nucleosome. Nucleosomes wrap and compact DNA into chromatin, limiting DNA accessibility to the cellular machineries which require DNA as a template. Histones thereby play a central role in transcription regulation, DNA repair, DNA replication and chromosomal stability. DNA accessibility is regulated via a complex set of post-translational modifications of histones, also called histone code, and nucleosome remodeling. This is Histone H2B.6 (H2B.6) from Oryza sativa subsp. indica (Rice).